The following is a 124-amino-acid chain: ATP synthase subunit H, mitochondrial (124 aa).

A mitochondrion-targeting transit peptide spans 1 to 32; that stretch reads MFPIASRRILLNASVLPLRLCNRNFTTTRISY. A disordered region spans residues 89 to 124; it reads NVETAHVAKESEEGESEPIEEDWLVLDDAEETKESH. Residues 100 to 124 show a composition bias toward acidic residues; sequence EEGESEPIEEDWLVLDDAEETKESH.

The protein belongs to the ATPase h subunit family. F-type ATPases have 2 components, CF(1) - the catalytic core - and CF(0) - the membrane proton channel. In yeast, the dimeric form of ATP synthase consists of 17 polypeptides: alpha, beta, gamma, delta, epsilon, 4 (B), 5 (OSCP), 6 (A), 8, 9 (C), d, E (Tim11), f, g, h, i/j and k.

Its subcellular location is the mitochondrion. The protein localises to the mitochondrion inner membrane. Its function is as follows. Mitochondrial membrane ATP synthase (F(1)F(0) ATP synthase or Complex V) produces ATP from ADP in the presence of a proton gradient across the membrane which is generated by electron transport complexes of the respiratory chain. F-type ATPases consist of two structural domains, F(1) - containing the extramembraneous catalytic core and F(0) - containing the membrane proton channel, linked together by a central stalk and a peripheral stalk. During catalysis, ATP synthesis in the catalytic domain of F(1) is coupled via a rotary mechanism of the central stalk subunits to proton translocation. Part of the complex F(0) domain. Minor subunit located with subunit a in the membrane. The sequence is that of ATP synthase subunit H, mitochondrial (ATP14) from Saccharomyces cerevisiae (strain ATCC 204508 / S288c) (Baker's yeast).